We begin with the raw amino-acid sequence, 257 residues long: uncharacterized protein (257 aa).

6 residues coordinate NAD(+): Asp-34, Asp-60, Val-61, Asn-87, Tyr-152, and Lys-156. The active-site Proton acceptor is the Tyr-152.

Belongs to the short-chain dehydrogenases/reductases (SDR) family.

This is an uncharacterized protein from Bacillus subtilis (strain 168).